The chain runs to 1066 residues: E3 ubiquitin-protein ligase RNF31 (1066 aa).

A polyubiquitin-binding region spans residues 1 to 479 (MPGDEERGFL…PEKQRQDKMR (479 aa)). Positions 70-141 (TLSTALNILE…SFPEGQEEPD (72 aa)) constitute a PUB domain. Residues 251-287 (LRQALPGSHQTASLSSSLPASSQPRPPSSSLALGDSS) form a disordered region. Positions 262–287 (ASLSSSLPASSQPRPPSSSLALGDSS) are enriched in low complexity. 2 RanBP2-type zinc fingers span residues 293–325 (PANA…PKGC) and 344–373 (ARDQ…PRLA). Ser-377 carries the post-translational modification Phosphoserine. The RanBP2-type 3 zinc finger occupies 403–432 (QPQVWYCDHCTFCNSGPVWVCAMCNRTRDP). The disordered stretch occupies residues 434–478 (PTQPALQSYPSSLEKGRPKPGSSQHLGSSLPASCGDPEKQRQDKM). A compositionally biased stretch (polar residues) spans 454 to 464 (GSSQHLGSSLP). The span at 469–478 (DPEKQRQDKM) shows a compositional bias: basic and acidic residues. Residues 557–610 (GNLDEAVEECVRARRRKVHELQSLGFGPKEGSLQALFQHGGDVARALTELQRQR) are interaction with RBCK1. One can recognise a UBA domain in the interval 558 to 609 (NLDEAVEECVRARRRKVHELQSLGFGPKEGSLQALFQHGGDVARALTELQRQ). The interval 689 to 923 (LAQECAVCGW…KSLHGHHPRD (235 aa)) is TRIAD supradomain. Zn(2+)-binding residues include Cys-693, Cys-696, Cys-711, Cys-713, Cys-716, Cys-719, Cys-738, Cys-741, Cys-793, Cys-796, Cys-811, Cys-814, Cys-819, Cys-822, His-830, Cys-835, Cys-865, and Cys-868. The RING-type 1 zinc finger occupies 693–743 (CAVCGWALPRNRMQALISCECTICPECFRQHFTIALKEKHITDMVCPACGR). The IBR-type zinc finger occupies 773–835 (ALFHKKLTEA…WEEQHRGRSC (63 aa)). The RING-type 2; atypical zinc finger occupies 865–895 (CPKCKFSYALARGGCMHFHCTQCRHQFCSGC). The active site involves Cys-879. Zn(2+) contacts are provided by Cys-884, Cys-887, Cys-892, Cys-895, Cys-910, and His-919. Positions 904-1066 (KCPDPNCKVK…LGQSIARRRK (163 aa)) are LDD domain.

This sequence belongs to the RBR family. In terms of assembly, component of the LUBAC complex (linear ubiquitin chain assembly complex) which consists of SHARPIN, RBCK1 and RNF31. LUBAC has a MW of approximately 600 kDa suggesting a heteromultimeric assembly of its subunits. Associates with the TNF-R1 signaling complex (TNF-RSC) in a stimulation-dependent manner. Interacts (via the PUB domain) with OTULIN (via the PIM motif); the interaction is direct. Interacts (via the PUB domain) with VCP (via the PIM motif). Interacts (via the PUB domain) with SPATA2 (via the PIM motif); interaction is direct and bridges RNF31 and CYLD. Interacts with CYLD; the interaction is indirect and is mediated via SPATA2. Interacts with MUSK. Interacts with CARD11, promoting linear ubiquitination of BCL10. Autoubiquitinated. Interaction with OTULIN is required to suppress formation of 'Met-1'-linked polyubiquitin chains and prevent subsequent inactivation of the LUBAC complex. Post-translationally, cleaved by caspase during apoptosis. As to expression, widely expressed (at protein level). Not expressed in heart.

Its subcellular location is the cytoplasm. The enzyme catalyses [E2 ubiquitin-conjugating enzyme]-S-ubiquitinyl-L-cysteine + [acceptor protein]-L-lysine = [E2 ubiquitin-conjugating enzyme]-L-cysteine + [acceptor protein]-N(6)-ubiquitinyl-L-lysine.. It functions in the pathway protein modification; protein ubiquitination. Its function is as follows. E3 ubiquitin-protein ligase component of the LUBAC complex which conjugates linear ('Met-1'-linked) polyubiquitin chains to substrates and plays a key role in NF-kappa-B activation and regulation of inflammation. LUBAC conjugates linear polyubiquitin to IKBKG and RIPK1 and is involved in activation of the canonical NF-kappa-B and the JNK signaling pathways. Linear ubiquitination mediated by the LUBAC complex interferes with TNF-induced cell death and thereby prevents inflammation. LUBAC is recruited to the TNF-R1 signaling complex (TNF-RSC) following polyubiquitination of TNF-RSC components by BIRC2 and/or BIRC3 and to conjugate linear polyubiquitin to IKBKG and possibly other components contributing to the stability of the complex. The LUBAC complex is also involved in innate immunity by conjugating linear polyubiquitin chains at the surface of bacteria invading the cytosol to form the ubiquitin coat surrounding bacteria. LUBAC is not able to initiate formation of the bacterial ubiquitin coat, and can only promote formation of linear polyubiquitins on pre-existing ubiquitin. Recruited to the surface of bacteria by RNF213, which initiates the bacterial ubiquitin coat. The bacterial ubiquitin coat acts as an 'eat-me' signal for xenophagy and promotes NF-kappa-B activation. Together with OTULIN, the LUBAC complex regulates the canonical Wnt signaling during angiogenesis. RNF31 is required for linear ubiquitination of BCL10, thereby promoting TCR-induced NF-kappa-B activation. Binds polyubiquitin of different linkage types. This chain is E3 ubiquitin-protein ligase RNF31, found in Mus musculus (Mouse).